Here is a 517-residue protein sequence, read N- to C-terminus: Phospholipase C C (517 aa).

The tat-type signal signal peptide spans 1–39 (MVSQGAFAGMSRRAFLAKAAGAGAAAVLTDWAAPVIEKA).

Belongs to the bacterial phospholipase C family. Predicted to be exported by the Tat system. The position of the signal peptide cleavage has not been experimentally proven.

It localises to the secreted. The protein resides in the cell wall. It catalyses the reaction a 1,2-diacyl-sn-glycero-3-phosphocholine + H2O = phosphocholine + a 1,2-diacyl-sn-glycerol + H(+). The catalysed reaction is 1,2-dihexadecanoyl-sn-glycero-3-phosphocholine + H2O = 1,2-dihexadecanoyl-sn-glycerol + phosphocholine + H(+). Functionally, involved in virulence. Induces cytotoxic effects on mouse macrophage cell lines, via direct or indirect enzymatic hydrolysis of cell membrane phospholipids. Hydrolyzes phosphatidylcholine. Does not have hemolytic activity. In Mycobacterium tuberculosis (strain ATCC 25618 / H37Rv), this protein is Phospholipase C C.